The primary structure comprises 418 residues: Protein YdhQ (418 aa).

The protein is Protein YdhQ (ydhQ) of Escherichia coli (strain K12).